The primary structure comprises 430 residues: Aspartate aminotransferase, mitochondrial (430 aa).

Residues 1–29 (MALLHSGRVLSGMAAAFHPGLAAAASARA) constitute a mitochondrion transit peptide. The residue at position 48 (threonine 48) is a Phosphothreonine. An N6-acetyllysine modification is found at lysine 59. Glycine 65 lines the substrate pocket. Lysine 73 is modified (N6-acetyllysine; alternate). An N6-succinyllysine; alternate modification is found at lysine 73. An N6-acetyllysine modification is found at lysine 82. Position 90 is an N6-acetyllysine; alternate (lysine 90). Lysine 90 is subject to N6-succinyllysine; alternate. Tyrosine 96 carries the post-translational modification 3'-nitrotyrosine; alternate. Tyrosine 96 carries the phosphotyrosine; alternate modification. An N6-acetyllysine; alternate mark is found at lysine 107 and lysine 122. N6-succinyllysine; alternate occurs at positions 107 and 122. Serine 143 carries the phosphoserine modification. Lysine 159 carries the N6-acetyllysine; alternate modification. Lysine 159 bears the N6-succinyllysine; alternate mark. Tryptophan 162 is a binding site for substrate. The residue at position 185 (lysine 185) is an N6-acetyllysine; alternate. Lysine 185 carries the N6-succinyllysine; alternate modification. Asparagine 215 provides a ligand contact to substrate. Lysine 227 carries the N6-succinyllysine modification. Lysine 234 carries the N6-acetyllysine modification. 2 positions are modified to N6-acetyllysine; alternate: lysine 279 and lysine 296. N6-(pyridoxal phosphate)lysine; alternate is present on lysine 279. An N6-succinyllysine; alternate modification is found at lysine 296. Lysine 302 carries the post-translational modification N6-acetyllysine. Lysine 309 bears the N6-acetyllysine; alternate mark. The residue at position 309 (lysine 309) is an N6-succinyllysine; alternate. Residue arginine 313 is modified to Asymmetric dimethylarginine. N6-acetyllysine; alternate is present on lysine 338. Lysine 338 is subject to N6-succinyllysine; alternate. Lysine 345 carries the N6-acetyllysine modification. N6-acetyllysine; alternate is present on lysine 363. Lysine 363 is subject to N6-succinyllysine; alternate. N6-acetyllysine occurs at positions 364 and 387. N6-acetyllysine; alternate is present on residues lysine 396 and lysine 404. 2 positions are modified to N6-succinyllysine; alternate: lysine 396 and lysine 404. Residue arginine 407 participates in substrate binding.

The protein belongs to the class-I pyridoxal-phosphate-dependent aminotransferase family. Homodimer. The cofactor is pyridoxal 5'-phosphate. As to expression, expressed in all tissues tested: liver, pancreas, kidney, heart, spleen, arterioles, and lymphocytes.

It localises to the mitochondrion matrix. Its subcellular location is the cell membrane. The catalysed reaction is L-aspartate + 2-oxoglutarate = oxaloacetate + L-glutamate. It catalyses the reaction L-kynurenine + 2-oxoglutarate = kynurenate + L-glutamate + H2O. Catalyzes the irreversible transamination of the L-tryptophan metabolite L-kynurenine to form kynurenic acid (KA). As a member of the malate-aspartate shuttle, it has a key role in the intracellular NAD(H) redox balance. Is important for metabolite exchange between mitochondria and cytosol, and for amino acid metabolism. Facilitates cellular uptake of long-chain free fatty acids. This chain is Aspartate aminotransferase, mitochondrial (Got2), found in Rattus norvegicus (Rat).